The primary structure comprises 98 residues: Aspartyl/glutamyl-tRNA(Asn/Gln) amidotransferase subunit C (98 aa).

The protein belongs to the GatC family. As to quaternary structure, heterotrimer of A, B and C subunits.

The catalysed reaction is L-glutamyl-tRNA(Gln) + L-glutamine + ATP + H2O = L-glutaminyl-tRNA(Gln) + L-glutamate + ADP + phosphate + H(+). It catalyses the reaction L-aspartyl-tRNA(Asn) + L-glutamine + ATP + H2O = L-asparaginyl-tRNA(Asn) + L-glutamate + ADP + phosphate + 2 H(+). Functionally, allows the formation of correctly charged Asn-tRNA(Asn) or Gln-tRNA(Gln) through the transamidation of misacylated Asp-tRNA(Asn) or Glu-tRNA(Gln) in organisms which lack either or both of asparaginyl-tRNA or glutaminyl-tRNA synthetases. The reaction takes place in the presence of glutamine and ATP through an activated phospho-Asp-tRNA(Asn) or phospho-Glu-tRNA(Gln). The sequence is that of Aspartyl/glutamyl-tRNA(Asn/Gln) amidotransferase subunit C from Arthrobacter sp. (strain FB24).